Here is a 254-residue protein sequence, read N- to C-terminus: tRNA pseudouridine synthase A (254 aa).

The active-site Nucleophile is D52. Position 111 (Y111) interacts with substrate.

The protein belongs to the tRNA pseudouridine synthase TruA family. Homodimer.

It catalyses the reaction uridine(38/39/40) in tRNA = pseudouridine(38/39/40) in tRNA. Its function is as follows. Formation of pseudouridine at positions 38, 39 and 40 in the anticodon stem and loop of transfer RNAs. The sequence is that of tRNA pseudouridine synthase A from Rhizorhabdus wittichii (strain DSM 6014 / CCUG 31198 / JCM 15750 / NBRC 105917 / EY 4224 / RW1) (Sphingomonas wittichii).